A 732-amino-acid polypeptide reads, in one-letter code: X-ray repair cross-complementing protein 5 (732 aa).

The VWFA domain maps to 9 to 161; sequence AVVLCVDVGV…CNLKKSGISL (153 aa). The tract at residues 138 to 165 is leucine-zipper; it reads LSSPFSQDQLDVIICNLKKSGISLQFFL. Lysine 195 participates in a covalent cross-link: Glycyl lysine isopeptide (Lys-Gly) (interchain with G-Cter in SUMO2). The Ku domain maps to 253–453; that stretch reads IGPNLSIKIV…CTPTEAQLSA (201 aa). The residue at position 258 (serine 258) is a Phosphoserine. Lysine 265 carries the N6-acetyllysine modification. Phosphoserine is present on serine 318. Position 332 is an N6-acetyllysine (lysine 332). Residues lysine 532 and lysine 534 each participate in a glycyl lysine isopeptide (Lys-Gly) (interchain with G-Cter in SUMO2) cross-link. Phosphothreonine is present on threonine 535. Residues lysine 567 and lysine 569 each participate in a glycyl lysine isopeptide (Lys-Gly) (interchain with G-Cter in SUMO2) cross-link. Phosphoserine; by PRKDC is present on residues serine 578, serine 580, and serine 581. An N6-acetyllysine modification is found at lysine 666. Glycyl lysine isopeptide (Lys-Gly) (interchain with G-Cter in SUMO2) cross-links involve residues lysine 670 and lysine 689. Positions 708–732 are disordered; sequence PKDKAKEDTTGPEEAGDVDDLLDMI. At threonine 716 the chain carries Phosphothreonine; by PRKDC. The segment covering 717-732 has biased composition (acidic residues); that stretch reads TGPEEAGDVDDLLDMI. The EEXXXDL motif motif lies at 720 to 728; it reads EEAGDVDDL.

Belongs to the ku80 family. As to quaternary structure, heterodimer composed of XRCC5/Ku80 and XRCC6/Ku70. Component of the core long-range non-homologous end joining (NHEJ) complex (also named DNA-PK complex) composed of PRKDC, LIG4, XRCC4, XRCC6/Ku70, XRCC5/Ku86 and NHEJ1/XLF. Additional component of the NHEJ complex includes PAXX. Following autophosphorylation, PRKDC dissociates from DNA, leading to formation of the short-range NHEJ complex, composed of LIG4, XRCC4, XRCC6/Ku70, XRCC5/Ku86 and NHEJ1/XLF. The XRCC5-XRCC6 dimer also associates with NAA15, and this complex displays DNA binding activity towards the osteocalcin FGF response element (OCFRE). In addition, XRCC5 binds to the osteoblast-specific transcription factors MSX2 and RUNX2. Interacts with ELF3. Interacts with APLF (via KBM motif). The XRCC5/XRCC6 dimer associates in a DNA-dependent manner with APEX1. Identified in a complex with DEAF1 and XRCC6. Interacts with NR4A3; the DNA-dependent protein kinase complex DNA-PK phosphorylates and activates NR4A3 and prevents NR4A3 ubiquitinylation and degradation. Interacts with RNF138. Interacts with CYREN (via KBM motif). Interacts with WRN (via KBM motif). Interacts (via N-terminus) with HSF1 (via N-terminus); this interaction is direct and prevents XRCC5/XRCC6 heterodimeric binding and non-homologous end joining (NHEJ) repair activities induced by ionizing radiation (IR). Interacts with DHX9; this interaction occurs in a RNA-dependent manner. Part of the HDP-RNP complex composed of at least HEXIM1, PRKDC, XRCC5, XRCC6, paraspeckle proteins (SFPQ, NONO, PSPC1, RBM14, and MATR3) and NEAT1 RNA. Interacts with ERCC6. Interacts with ATF7. The XRCC5-XRCC6 dimer associates with ALKBH2. Interacts with TPRN; TPRN interacts with a number of DNA damage response proteins, is recruited to sites of DNA damage and may play a role in DNA damage repair. Interacts with ERCC6L2. Post-translationally, ADP-ribosylated by PARP3. In terms of processing, phosphorylated on serine residues. Phosphorylation by PRKDC may enhance helicase activity. Sumoylated. Post-translationally, ubiquitinated by RNF8 via 'Lys-48'-linked ubiquitination following DNA damage, leading to its degradation and removal from DNA damage sites. Ubiquitinated by RNF138, leading to remove the Ku complex from DNA breaks.

It is found in the nucleus. The protein resides in the nucleolus. Its subcellular location is the chromosome. Functionally, single-stranded DNA-dependent ATP-dependent helicase that plays a key role in DNA non-homologous end joining (NHEJ) by recruiting DNA-PK to DNA. Required for double-strand break repair and V(D)J recombination. Also has a role in chromosome translocation. The DNA helicase II complex binds preferentially to fork-like ends of double-stranded DNA in a cell cycle-dependent manner. It works in the 3'-5' direction. During NHEJ, the XRCC5-XRRC6 dimer performs the recognition step: it recognizes and binds to the broken ends of the DNA and protects them from further resection. Binding to DNA may be mediated by XRCC6. The XRCC5-XRRC6 dimer acts as a regulatory subunit of the DNA-dependent protein kinase complex DNA-PK by increasing the affinity of the catalytic subunit PRKDC to DNA by 100-fold. The XRCC5-XRRC6 dimer is probably involved in stabilizing broken DNA ends and bringing them together. The assembly of the DNA-PK complex to DNA ends is required for the NHEJ ligation step. The XRCC5-XRRC6 dimer probably also acts as a 5'-deoxyribose-5-phosphate lyase (5'-dRP lyase), by catalyzing the beta-elimination of the 5' deoxyribose-5-phosphate at an abasic site near double-strand breaks. XRCC5 probably acts as the catalytic subunit of 5'-dRP activity, and allows to 'clean' the termini of abasic sites, a class of nucleotide damage commonly associated with strand breaks, before such broken ends can be joined. The XRCC5-XRRC6 dimer together with APEX1 acts as a negative regulator of transcription. In association with NAA15, the XRCC5-XRRC6 dimer binds to the osteocalcin promoter and activates osteocalcin expression. As part of the DNA-PK complex, involved in the early steps of ribosome assembly by promoting the processing of precursor rRNA into mature 18S rRNA in the small-subunit processome. Binding to U3 small nucleolar RNA, recruits PRKDC and XRCC5/Ku86 to the small-subunit processome. Plays a role in the regulation of DNA virus-mediated innate immune response by assembling into the HDP-RNP complex, a complex that serves as a platform for IRF3 phosphorylation and subsequent innate immune response activation through the cGAS-STING pathway. This is X-ray repair cross-complementing protein 5 (Xrcc5) from Mus musculus (Mouse).